The primary structure comprises 355 residues: Glucose-1-phosphate thymidylyltransferase (355 aa).

Mg(2+) is bound by residues D107 and D220.

This sequence belongs to the glucose-1-phosphate thymidylyltransferase family. Requires Mg(2+) as cofactor.

The catalysed reaction is dTTP + alpha-D-glucose 1-phosphate + H(+) = dTDP-alpha-D-glucose + diphosphate. Its pathway is antibiotic biosynthesis; streptomycin biosynthesis. Its function is as follows. Involved in the biosynthesis of the streptose moiety of streptomycin. Catalyzes the formation of dTDP-glucose, from dTTP and glucose 1-phosphate, as well as its pyrophosphorolysis. This is Glucose-1-phosphate thymidylyltransferase (strD) from Streptomyces griseus.